A 98-amino-acid polypeptide reads, in one-letter code: NADH-ubiquinone oxidoreductase chain 4L (98 aa).

3 helical membrane-spanning segments follow: residues Met-1 to Ile-21, Met-36 to Ile-56, and Leu-61 to Ile-81.

Belongs to the complex I subunit 4L family.

The protein localises to the mitochondrion membrane. The enzyme catalyses a ubiquinone + NADH + 5 H(+)(in) = a ubiquinol + NAD(+) + 4 H(+)(out). Functionally, core subunit of the mitochondrial membrane respiratory chain NADH dehydrogenase (Complex I) which catalyzes electron transfer from NADH through the respiratory chain, using ubiquinone as an electron acceptor. Part of the enzyme membrane arm which is embedded in the lipid bilayer and involved in proton translocation. The protein is NADH-ubiquinone oxidoreductase chain 4L (MT-ND4L) of Didelphis virginiana (North American opossum).